The following is a 151-amino-acid chain: Sperm surface protein Sp17 (151 aa).

The span at F68 to E98 shows a compositional bias: basic and acidic residues. Disordered regions lie at residues F68–E115 and A130–K151. Residues E114 to Q143 form the IQ domain.

In terms of assembly, homodimer. May interact with ROPN1. Testis- and sperm-specific.

Its subcellular location is the membrane. Functionally, sperm surface zona pellucida binding protein. Helps to bind spermatozoa to the zona pellucida with high affinity. Might function in binding zona pellucida and carbohydrates. The chain is Sperm surface protein Sp17 (SPA17) from Macaca fascicularis (Crab-eating macaque).